The sequence spans 118 residues: uncharacterized protein (118 aa).

Residues 1–49 (MDYVGGSLKLKNVKKKPLKKKKKDSKKLAEKVQEHSSRDKSPLEENGVS) are disordered. Residues 11–25 (KNVKKKPLKKKKKDS) show a composition bias toward basic residues. Basic and acidic residues predominate over residues 26 to 43 (KKLAEKVQEHSSRDKSPL).

This is an uncharacterized protein from Schizosaccharomyces pombe (strain 972 / ATCC 24843) (Fission yeast).